A 356-amino-acid polypeptide reads, in one-letter code: Testis-expressed protein 19.1 (356 aa).

The tract at residues 1 to 78 (MCPPVSVRHG…WDAEPMEHLS (78 aa)) is interaction with LIRE1. The segment covering 59–72 (LSEEEEEEEVWDAE) has biased composition (acidic residues). A disordered region spans residues 59–107 (LSEEEEEEEVWDAEPMEHLSESESLESDSKQDAGSEQDAGSEPNTRSEQ). The span at 73–91 (PMEHLSESESLESDSKQDA) shows a compositional bias: basic and acidic residues. An important for interaction with piRNA region spans residues 139 to 186 (QWVVFSISVPTELLPQEAVPLDLGPEDVEWTQALPWRLDVLFPCSHRL).

In terms of assembly, interacts with UBR2; does not lead to Tex19.1 degradation and stabilizes it. Interacts with piRNA-associated proteins DDX4, EDC4, MAEL, PIWIL1, PIWIL2, RANBP9 and TDRD6. Interacts with L1RE1.

It localises to the cytoplasm. Required during spermatogenesis and placenta development, participating in the repression of retrotransposable elements and prevent their mobilization. Collaborates with the Piwi-interacting RNA (piRNA) pathway, which mediates the repression of transposable elements during meiosis by forming complexes composed of piRNAs and Piwi proteins. Interacts with Piwi proteins and directly binds piRNAs, a class of 24 to 30 nucleotide RNAs that are generated by a Dicer-independent mechanism and are primarily derived from transposons and other repeated sequence elements. Also during spermatogenesis, promotes, with UBR2, SPO11-dependent recombination foci to accumulate and drive robust homologous chromosome synapsis. Interacts with LINE-1 retrotransposon encoded LIRE1, stimulates LIRE1 polyubiquitination, mediated by UBR2, and degradation, inhibiting LINE-1 retrotransposon mobilization. This is Testis-expressed protein 19.1 (Tex19.1) from Rattus norvegicus (Rat).